Reading from the N-terminus, the 495-residue chain is 1-aminocyclopropane-1-carboxylate synthase 6 (495 aa).

The substrate site is built by glutamate 58 and tyrosine 96. Lysine 280 bears the N6-(pyridoxal phosphate)lysine mark. Phosphoserine occurs at positions 480, 483, and 488.

This sequence belongs to the class-I pyridoxal-phosphate-dependent aminotransferase family. As to quaternary structure, homodimer and heterodimer. In vivo, the relevance of heterodimerization with other ACS enzymes is however unsure. Interacts with GRF3. The cofactor is pyridoxal 5'-phosphate. Phosphorylated on serine residue by MAP kinase (MPK6). In terms of processing, may be processed at its C-terminus. As to expression, expressed in roots and flowers.

It carries out the reaction S-adenosyl-L-methionine = 1-aminocyclopropane-1-carboxylate + S-methyl-5'-thioadenosine + H(+). It participates in alkene biosynthesis; ethylene biosynthesis via S-adenosyl-L-methionine; ethylene from S-adenosyl-L-methionine: step 1/2. In terms of biological role, 1-aminocyclopropane-1-carboxylate synthase (ACS) enzymes catalyze the conversion of S-adenosyl-L-methionine (SAM) into 1-aminocyclopropane-1-carboxylate (ACC), a direct precursor of ethylene. Involved in bacterial flagellin-induced ethylene production. This chain is 1-aminocyclopropane-1-carboxylate synthase 6 (ACS6), found in Arabidopsis thaliana (Mouse-ear cress).